The sequence spans 29 residues: ShK homolog Ask132958 (29 aa).

Residues 1–29 (CENTISGCSRADCLLTHRKQGCQKTCGLC) form the ShKT domain. 3 disulfides stabilise this stretch: cysteine 1-cysteine 29, cysteine 8-cysteine 22, and cysteine 13-cysteine 26.

Belongs to the sea anemone type 1 potassium channel toxin family. Type 1a subfamily.

Its subcellular location is the secreted. The protein resides in the nematocyst. Its function is as follows. This peptide is similar to the potassium channel toxin ShK, but does not show activity on potassium channels. It appears that Lys-19, which is expected to occupy the pore of the channel, is not sufficiently accessible for binding, and therefore that this peptide must have a distinct functional role that does not involve potassium channels. It is noteworthy that this peptide is much more stable in the presence of trypsin, chymotrypsin and pepsin than the toxin ShK. This is ShK homolog Ask132958 from Anemonia sulcata (Mediterranean snakelocks sea anemone).